The following is an 80-amino-acid chain: MEIDLLSFSIKRILNLSAFIHIYSRYFRPDTFLSSKQSITMSVKKPYKHPNCTSVIHINRVAIVIEQEKGKKSKQNLIPS.

This is an uncharacterized protein from Schizosaccharomyces pombe (strain 972 / ATCC 24843) (Fission yeast).